The following is a 953-amino-acid chain: Translation initiation factor IF-2 (953 aa).

Disordered stretches follow at residues 52–247 and 279–363; these read KASK…LAEL and TKLK…TERK. 3 stretches are compositionally biased toward basic and acidic residues: residues 80–89, 98–111, and 140–188; these read TGSEHVEKTQ, FKAE…EQAA, and QGDK…ENHK. Residues 191 to 207 show a composition bias toward polar residues; it reads RFTNQKKQGRQEPQSKS. The span at 229 to 247 shows a compositional bias: basic and acidic residues; the sequence is RQSETRFRAQQEAKRLAEL. Residues 282–291 show a composition bias toward polar residues; it reads KSSNISAKST. Residues 300–317 are compositionally biased toward basic and acidic residues; sequence ARPEKNRELTHHSQEGQK. Positions 322–338 are enriched in low complexity; the sequence is SWNSQNQVRNQKNSNWN. The segment covering 339 to 348 has biased composition (basic residues); sequence KNKKTKKGKN. Residues 454–623 form the tr-type G domain; sequence ERAPVVTIMG…LLVAEVEELK (170 aa). The tract at residues 463-470 is G1; the sequence is GHVDHGKT. 463 to 470 contributes to the GTP binding site; it reads GHVDHGKT. The tract at residues 488 to 492 is G2; that stretch reads GITQH. The tract at residues 509-512 is G3; sequence DTPG. GTP is bound by residues 509-513 and 563-566; these read DTPGH and NKID. A G4 region spans residues 563–566; sequence NKID. The segment at 599–601 is G5; it reads SAK.

The protein belongs to the TRAFAC class translation factor GTPase superfamily. Classic translation factor GTPase family. IF-2 subfamily.

It localises to the cytoplasm. In terms of biological role, one of the essential components for the initiation of protein synthesis. Protects formylmethionyl-tRNA from spontaneous hydrolysis and promotes its binding to the 30S ribosomal subunits. Also involved in the hydrolysis of GTP during the formation of the 70S ribosomal complex. In Streptococcus pyogenes serotype M5 (strain Manfredo), this protein is Translation initiation factor IF-2.